The primary structure comprises 297 residues: Protein COFACTOR ASSEMBLY OF COMPLEX C SUBUNIT B CCB4, chloroplastic (297 aa).

Residues 1–33 constitute a chloroplast transit peptide; sequence MEARIILLRIQIPWSANRQFSHPPLDFPRFIRA. Residues 34-70 lie on the Stromal side of the membrane; sequence SSSSTSQKPKTYEGPKPRKNLVADFISKNDDLVRSLP. Residues 71 to 91 traverse the membrane as a helical segment; that stretch reads IYVGGASLLAVLFNRTVSGIA. Residues 92-103 are Lumenal-facing; sequence PVADASSSQSRA. A helical transmembrane segment spans residues 104–124; the sequence is DLLALGLAVTNLLTGLVWLSI. The Stromal portion of the chain corresponds to 125 to 297; sequence RPKSITPVNP…DSDEISRVTV (173 aa).

Its subcellular location is the plastid. The protein resides in the chloroplast thylakoid membrane. Functionally, required for the biogenesis and accumulation of native cytochrome b6 in the thylakoid membrane. Controls the conversion of apocytochrome b6 to holocytochrome b6. Required for covalent binding of the c-type heme to cytochrome b6. This is Protein COFACTOR ASSEMBLY OF COMPLEX C SUBUNIT B CCB4, chloroplastic from Arabidopsis thaliana (Mouse-ear cress).